The sequence spans 705 residues: Dolichyl-diphosphooligosaccharide--protein glycosyltransferase subunit STT3A (705 aa).

Residues 1–17 (MTKLGFLRLSYEKQDTL) are Cytoplasmic-facing. The chain crosses the membrane as a helical span at residues 18 to 38 (LKLLILSMAAVLSFSTRLFAV). At 39–119 (LRFESVIHEF…IDIRNVCVFL (81 aa)) the chain is on the lumenal side. The DXD motif 1 signature appears at 47 to 49 (EFD). D49 is a binding site for Mn(2+). The chain crosses the membrane as a helical span at residues 120–138 (APLFSSFTTIVTYHLTKEL). At 139–140 (KD) the chain is on the cytoplasmic side. A helical membrane pass occupies residues 141–158 (AGAGLLAAAMIAVVPGYI). The Lumenal segment spans residues 159 to 169 (SRSVAGSYDNE). Positions 167 and 169 each coordinate Mn(2+). The DXD motif 2 motif lies at 167–169 (DNE). A helical transmembrane segment spans residues 170–189 (GIAIFCMLLTYYMWIKAVKT). Topologically, residues 190–191 (GS) are cytoplasmic. A helical transmembrane segment spans residues 192–206 (IYWAAKCALAYFYMV). Over 207–211 (SSWGG) the chain is Lumenal. Residues 212 to 228 (YVFLINLIPLHVLVLML) traverse the membrane as a helical segment. The Cytoplasmic portion of the chain corresponds to 229–233 (TGRFS). Residues 234–259 (HRIYVAYCTVYCLGTILSMQISFVGF) form a helical membrane-spanning segment. Over 260–267 (QPVLSSEH) the chain is Lumenal. A helical transmembrane segment spans residues 268 to 287 (MAAFGVFGLCQIHAFVDYLR). At 288–300 (SKLNPQQFEVLFR) the chain is on the cytoplasmic side. The chain crosses the membrane as a helical span at residues 301–321 (SVISLVGFVLLTVGALLMLTG). Residues 322 to 356 (KISPWTGRFYSLLDPSYAKNNIPIIASVSEHQPTT) are Lumenal-facing. An SVSE motif motif is present at residues 348 to 351 (SVSE). The chain crosses the membrane as a helical span at residues 357 to 379 (WSSYYFDLQLLVFMFPVGLYYCF). Over 380 to 385 (SNLSDA) the chain is Cytoplasmic. The helical transmembrane segment at 386 to 402 (RIFIIMYGVTSMYFSAV) threads the bilayer. Over 403–406 (MVRL) the chain is Lumenal. R405 is a binding site for dolichyl diphosphooligosaccharide. A helical transmembrane segment spans residues 407–428 (MLVLAPVMCILSGIGVSQVLST). Over 429–453 (YMKNLDISRPDKKSKKQQDSTYPIK) the chain is Cytoplasmic. Residues 454–473 (NEVASGMILVMAFFLITYTF) form a helical membrane-spanning segment. Residues 474–705 (HSTWVTSEAY…DLDNRGLSRT (232 aa)) are Lumenal-facing. The segment at 525-527 (WWD) is interacts with target acceptor peptide in protein substrate. Positions 525–529 (WWDYG) match the WWDYG motif motif. A dolichyl diphosphooligosaccharide-binding site is contributed by Y530. N537 and N544 each carry an N-linked (GlcNAc...) asparagine glycan. N548 carries N-linked (GlcNAc...) (high mannose) asparagine glycosylation. Residues 592–599 (DINKFLWM) carry the DK motif motif.

Belongs to the STT3 family. Component of the oligosaccharyltransferase (OST) complex. There are 2 OST complexes, OST-A and OST-B, which contain STT3A or STT3B as catalytic subunit, respectively. OST-A and OST-B contain common core subunits RPN1, RPN2, OST48, OST4, DAD1 and TMEM258, and OST-A contains DC2/OSTC and KRTCAP2/KCP2 specific accessory subunits. OST-A complex assembly occurs through the formation of 3 subcomplexes. Subcomplex 1 contains RPN1 and TMEM258, subcomplex 2 contains the OST-A-specific subunits STT3A, DC2/OSTC, and KCP2 as well as the core subunit OST4, and subcomplex 3 contains RPN2, DAD1, and OST48. The OST-A complex can form stable complexes with the Sec61 complex or with both the Sec61 and TRAP complexes. Requires Mg(2+) as cofactor. It depends on Mn(2+) as a cofactor.

The protein localises to the endoplasmic reticulum. It is found in the endoplasmic reticulum membrane. The catalysed reaction is a di-trans,poly-cis-dolichyl diphosphooligosaccharide + L-asparaginyl-[protein] = N(4)-(oligosaccharide-(1-&gt;4)-N-acetyl-beta-D-glucosaminyl-(1-&gt;4)-N-acetyl-beta-D-glucosaminyl)-L-asparaginyl-[protein] + a di-trans,poly-cis-dolichyl diphosphate + H(+). The protein operates within protein modification; protein glycosylation. Catalytic subunit of the oligosaccharyl transferase (OST) complex that catalyzes the initial transfer of a defined glycan (Glc(3)Man(9)GlcNAc(2) in eukaryotes) from the lipid carrier dolichol-pyrophosphate to an asparagine residue within an Asn-X-Ser/Thr consensus motif in nascent polypeptide chains, the first step in protein N-glycosylation. N-glycosylation occurs cotranslationally and the complex associates with the Sec61 complex at the channel-forming translocon complex that mediates protein translocation across the endoplasmic reticulum (ER). All subunits are required for a maximal enzyme activity. This subunit contains the active site and the acceptor peptide and donor lipid-linked oligosaccharide (LLO) binding pockets. STT3A is present in the majority of OST complexes and mediates cotranslational N-glycosylation of most sites on target proteins, while STT3B-containing complexes are required for efficient post-translational glycosylation and mediate glycosylation of sites that have been skipped by STT3A. STT3A-containing OST-A complex is also required to prevent hyperglycosylation of some target proteins by preventing glycosylation of facultative sites before folding of target proteins is completed. The chain is Dolichyl-diphosphooligosaccharide--protein glycosyltransferase subunit STT3A from Mus musculus (Mouse).